We begin with the raw amino-acid sequence, 443 residues long: Thymidine phosphorylase (443 aa).

The protein belongs to the thymidine/pyrimidine-nucleoside phosphorylase family. Homodimer.

It carries out the reaction thymidine + phosphate = 2-deoxy-alpha-D-ribose 1-phosphate + thymine. It participates in pyrimidine metabolism; dTMP biosynthesis via salvage pathway; dTMP from thymine: step 1/2. Its function is as follows. The enzymes which catalyze the reversible phosphorolysis of pyrimidine nucleosides are involved in the degradation of these compounds and in their utilization as carbon and energy sources, or in the rescue of pyrimidine bases for nucleotide synthesis. This is Thymidine phosphorylase from Shewanella baltica (strain OS155 / ATCC BAA-1091).